The following is a 334-amino-acid chain: Phosphate acyltransferase (334 aa).

The protein belongs to the PlsX family. As to quaternary structure, homodimer. Probably interacts with PlsY.

It localises to the cytoplasm. The catalysed reaction is a fatty acyl-[ACP] + phosphate = an acyl phosphate + holo-[ACP]. Its pathway is lipid metabolism; phospholipid metabolism. In terms of biological role, catalyzes the reversible formation of acyl-phosphate (acyl-PO(4)) from acyl-[acyl-carrier-protein] (acyl-ACP). This enzyme utilizes acyl-ACP as fatty acyl donor, but not acyl-CoA. The protein is Phosphate acyltransferase of Fervidobacterium nodosum (strain ATCC 35602 / DSM 5306 / Rt17-B1).